The sequence spans 402 residues: 3-isopropylmalate dehydratase large subunit 2 (402 aa).

Cys280, Cys341, and Cys344 together coordinate [4Fe-4S] cluster.

It belongs to the aconitase/IPM isomerase family. LeuC type 2 subfamily. Heterodimer of LeuC and LeuD. Requires [4Fe-4S] cluster as cofactor.

It catalyses the reaction (2R,3S)-3-isopropylmalate = (2S)-2-isopropylmalate. It participates in amino-acid biosynthesis; L-leucine biosynthesis; L-leucine from 3-methyl-2-oxobutanoate: step 2/4. Catalyzes the isomerization between 2-isopropylmalate and 3-isopropylmalate, via the formation of 2-isopropylmaleate. In Methanopyrus kandleri (strain AV19 / DSM 6324 / JCM 9639 / NBRC 100938), this protein is 3-isopropylmalate dehydratase large subunit 2.